The primary structure comprises 475 residues: Aspartyl/glutamyl-tRNA(Asn/Gln) amidotransferase subunit B (475 aa).

Belongs to the GatB/GatE family. GatB subfamily. In terms of assembly, heterotrimer of A, B and C subunits.

It carries out the reaction L-glutamyl-tRNA(Gln) + L-glutamine + ATP + H2O = L-glutaminyl-tRNA(Gln) + L-glutamate + ADP + phosphate + H(+). The catalysed reaction is L-aspartyl-tRNA(Asn) + L-glutamine + ATP + H2O = L-asparaginyl-tRNA(Asn) + L-glutamate + ADP + phosphate + 2 H(+). Its function is as follows. Allows the formation of correctly charged Asn-tRNA(Asn) or Gln-tRNA(Gln) through the transamidation of misacylated Asp-tRNA(Asn) or Glu-tRNA(Gln) in organisms which lack either or both of asparaginyl-tRNA or glutaminyl-tRNA synthetases. The reaction takes place in the presence of glutamine and ATP through an activated phospho-Asp-tRNA(Asn) or phospho-Glu-tRNA(Gln). The protein is Aspartyl/glutamyl-tRNA(Asn/Gln) amidotransferase subunit B of Caldanaerobacter subterraneus subsp. tengcongensis (strain DSM 15242 / JCM 11007 / NBRC 100824 / MB4) (Thermoanaerobacter tengcongensis).